The chain runs to 726 residues: Putative RNA polymerase II subunit B1 CTD phosphatase RPAP2 homolog (726 aa).

Residues 43–131 (AAASLLSGPD…LPPDRPFGVS (89 aa)) form an RTR1-type zinc finger. Residues cysteine 66, cysteine 71, cysteine 107, and cysteine 111 each contribute to the Zn(2+) site. Residues 209–218 (VGGPKKEAKQ) are compositionally biased toward basic and acidic residues. Disordered regions lie at residues 209–242 (VGGP…SGES) and 294–323 (KKDK…GRDG). Residues 220 to 241 (DACSAEQSSNINVDSRNASSGE) are compositionally biased toward polar residues.

Belongs to the RPAP2 family.

The protein resides in the nucleus. It carries out the reaction O-phospho-L-seryl-[protein] + H2O = L-seryl-[protein] + phosphate. It catalyses the reaction O-phospho-L-threonyl-[protein] + H2O = L-threonyl-[protein] + phosphate. Putative RNA polymerase II subunit B1 C-terminal domain (CTD) phosphatase involved in RNA polymerase II transcription regulation. The sequence is that of Putative RNA polymerase II subunit B1 CTD phosphatase RPAP2 homolog from Oryza sativa subsp. japonica (Rice).